The sequence spans 226 residues: MDLARVHTPRGWYDDFVNRLVNCARCPRLVSYRSTVKPLRRYESWSYWGRPVPPWGDLNARVMVVGLAPAAHGGNRTGRMFTGDASAQNLFKALFLLGLSNKPYSVSRDDGVEVRCVYITSAVKCAPPKNRPTAEEVYNCSSWLREELEAVRPRAVVALGELAWRAVLKILGATTAAFKHGEVVNAAGVRVYASYHPSPLNVNTGRLTVETLAEVLRRAAADAGCL.

4 residues coordinate [4Fe-4S] cluster: C23, C26, C125, and C140.

The protein belongs to the uracil-DNA glycosylase (UDG) superfamily. Type 5 (UDGb) family.

DNA glycosylase with broad substrate specificity. Can remove uracil from double-stranded DNA containing either a U/G or U/A base pair. Can also process hydroxymethyluracil (mispaired with guanine or adenine), hypoxanthine and fluorouracil. Exhibits a clear preference for double-stranded DNA substrates, but can also process uracil in single-stranded DNA, with lower efficiency. This chain is Type-5 uracil-DNA glycosylase, found in Pyrobaculum aerophilum (strain ATCC 51768 / DSM 7523 / JCM 9630 / CIP 104966 / NBRC 100827 / IM2).